A 112-amino-acid polypeptide reads, in one-letter code: Transmembrane protein 14 homolog (112 aa).

The next 4 membrane-spanning stretches (helical) occupy residues 9-26 (FKLN…GVIG), 36-53 (LIAG…AYYL), 60-77 (VGLG…GVMG), and 87-109 (IPII…LYNI).

This sequence belongs to the TMEM14 family.

Its subcellular location is the membrane. This chain is Transmembrane protein 14 homolog, found in Dictyostelium discoideum (Social amoeba).